Reading from the N-terminus, the 282-residue chain is Release factor glutamine methyltransferase (282 aa).

Positions 141, 169, and 186 each coordinate S-adenosyl-L-methionine. Substrate is bound at residue asparagine 186 to tyrosine 189.

Belongs to the protein N5-glutamine methyltransferase family. PrmC subfamily.

It catalyses the reaction L-glutaminyl-[peptide chain release factor] + S-adenosyl-L-methionine = N(5)-methyl-L-glutaminyl-[peptide chain release factor] + S-adenosyl-L-homocysteine + H(+). Functionally, methylates the class 1 translation termination release factors RF1/PrfA and RF2/PrfB on the glutamine residue of the universally conserved GGQ motif. The protein is Release factor glutamine methyltransferase of Mycoplasma mycoides subsp. mycoides SC (strain CCUG 32753 / NCTC 10114 / PG1).